The sequence spans 289 residues: Phycobilisome 39 kDa linker polypeptide, phycocyanin-associated, rod (289 aa).

A PBS-linker domain is found at 2–180; sequence PITSAASRLG…LYRGYANSDR (179 aa). The tract at residues 213–233 is disordered; that stretch reads SYLPSKQGTAPSRTFGRSSQG. A compositionally biased stretch (polar residues) spans 216–233; that stretch reads PSKQGTAPSRTFGRSSQG. The CpcD-like domain occupies 236 to 288; the sequence is PRLYRIEVTGISLPRYPKVRRSNKEFIVPYEQLSSTLQQINKLGGKVASITFA.

Belongs to the phycobilisome linker protein family.

The protein localises to the cellular thylakoid membrane. Its function is as follows. Rod linker protein, associated with phycocyanin. Linker polypeptides determine the state of aggregation and the location of the disk-shaped phycobiliprotein units within the phycobilisome and modulate their spectroscopic properties in order to mediate a directed and optimal energy transfer. This chain is Phycobilisome 39 kDa linker polypeptide, phycocyanin-associated, rod (cpcI2), found in Microchaete diplosiphon (Fremyella diplosiphon).